The chain runs to 396 residues: MKRLFTSESVTEGHPDKVADQISDAILDALIEQDPDARVAVETLVTTGLAVVAGEVTTEAYVDIQDIVRRTILDIGYTRAKYGFDGETCGVVTSIHSQSPDIALGVNKALEAKEKNDDGDEFDKIGAGDQGMMFGYATNETPEFMPLPIVLAHQLAMRLSKVRKEKIVPFLRPDGKTQVTVEYSDDGKPMRIDTILISAQHDPNVTINELKEVLLEHVIKPTIPEQYWSDNIKILVNPTGRFVLGGPSADTGLTGRKIIVDTYGGWVPHGGGAFSGKDPTKVDRSAHYMARYVAKNVVAAGLADRFMIQVAYAIGKARPVSLMIDTFSTSKVDEEKLKDVIIQLFDFRPLAIINKLNLQRPIYKKTAAYGHFGRNDPDFTWESLDAVEELKRAFNI.

His14 provides a ligand contact to ATP. Asp16 contributes to the Mg(2+) binding site. K(+) is bound at residue Glu42. Residues Glu55 and Gln98 each contribute to the L-methionine site. Positions 98-108 are flexible loop; the sequence is QSPDIALGVNK. Residues 174–176, 241–242, Asp250, 256–257, Ala273, and Lys277 contribute to the ATP site; these read DGK, RF, and RK. An L-methionine-binding site is contributed by Asp250. L-methionine is bound at residue Lys281.

Belongs to the AdoMet synthase family. As to quaternary structure, homotetramer; dimer of dimers. The cofactor is Mg(2+). K(+) is required as a cofactor.

Its subcellular location is the cytoplasm. The catalysed reaction is L-methionine + ATP + H2O = S-adenosyl-L-methionine + phosphate + diphosphate. It functions in the pathway amino-acid biosynthesis; S-adenosyl-L-methionine biosynthesis; S-adenosyl-L-methionine from L-methionine: step 1/1. In terms of biological role, catalyzes the formation of S-adenosylmethionine (AdoMet) from methionine and ATP. The overall synthetic reaction is composed of two sequential steps, AdoMet formation and the subsequent tripolyphosphate hydrolysis which occurs prior to release of AdoMet from the enzyme. In Pseudothermotoga lettingae (strain ATCC BAA-301 / DSM 14385 / NBRC 107922 / TMO) (Thermotoga lettingae), this protein is S-adenosylmethionine synthase.